Here is a 660-residue protein sequence, read N- to C-terminus: Arginine--tRNA ligase, cytoplasmic (660 aa).

The residue at position 1 (Met1) is an N-acetylmethionine. The could be involved in the assembly of the multisynthetase complex stretch occupies residues 1–72 (MDALVAHCSA…QAERNKPTKT (72 aa)). L-arginine-binding positions include 200 to 202 (SPN), His211, Tyr384, Asp388, and Gln412. Positions 201-212 (PNIAKEMHVGHL) match the 'HIGH' region motif. Residues 529–543 (NTAAYLLYAFTRIRS) form an interaction with tRNA region.

Belongs to the class-I aminoacyl-tRNA synthetase family. In terms of assembly, interacts (via N-terminus) with AIMP1 (via N-terminus); this stimulates its catalytic activity. Interacts (via N-terminus) with LARS2 (via C-terminus). Monomer. Part of a multisubunit complex that groups tRNA ligases for Arg (RARS1), Asp (DARS1), Gln (QARS1), Ile (IARS1), Leu (LARS1), Lys (KARS1), Met (MARS1) the bifunctional ligase for Glu and Pro (EPRS1) and the auxiliary subunits AIMP1/p43, AIMP2/p38 and EEF1E1/p18. Interacts with QARS1. Part of a complex composed of RARS1, QARS1 and AIMP1.

The protein resides in the cytoplasm. The protein localises to the cytosol. It carries out the reaction tRNA(Arg) + L-arginine + ATP = L-arginyl-tRNA(Arg) + AMP + diphosphate. Functionally, forms part of a macromolecular complex that catalyzes the attachment of specific amino acids to cognate tRNAs during protein synthesis. Modulates the secretion of AIMP1 and may be involved in generation of the inflammatory cytokine EMAP2 from AIMP1. The protein is Arginine--tRNA ligase, cytoplasmic (RARS1) of Bos taurus (Bovine).